Consider the following 214-residue polypeptide: Phosphatidylserine decarboxylase proenzyme (214 aa).

Catalysis depends on serine 183, which acts as the Schiff-base intermediate with substrate; via pyruvic acid. Serine 183 is subject to Pyruvic acid (Ser); by autocatalysis.

It belongs to the phosphatidylserine decarboxylase family. PSD-A subfamily. In terms of assembly, heterodimer of a large membrane-associated beta subunit and a small pyruvoyl-containing alpha subunit. Requires pyruvate as cofactor. Is synthesized initially as an inactive proenzyme. Formation of the active enzyme involves a self-maturation process in which the active site pyruvoyl group is generated from an internal serine residue via an autocatalytic post-translational modification. Two non-identical subunits are generated from the proenzyme in this reaction, and the pyruvate is formed at the N-terminus of the alpha chain, which is derived from the carboxyl end of the proenzyme. The post-translation cleavage follows an unusual pathway, termed non-hydrolytic serinolysis, in which the side chain hydroxyl group of the serine supplies its oxygen atom to form the C-terminus of the beta chain, while the remainder of the serine residue undergoes an oxidative deamination to produce ammonia and the pyruvoyl prosthetic group on the alpha chain.

It localises to the cell membrane. It carries out the reaction a 1,2-diacyl-sn-glycero-3-phospho-L-serine + H(+) = a 1,2-diacyl-sn-glycero-3-phosphoethanolamine + CO2. Its pathway is phospholipid metabolism; phosphatidylethanolamine biosynthesis; phosphatidylethanolamine from CDP-diacylglycerol: step 2/2. Catalyzes the formation of phosphatidylethanolamine (PtdEtn) from phosphatidylserine (PtdSer). In Syntrophotalea carbinolica (strain DSM 2380 / NBRC 103641 / GraBd1) (Pelobacter carbinolicus), this protein is Phosphatidylserine decarboxylase proenzyme.